Consider the following 212-residue polypeptide: Thymidylate kinase (212 aa).

Residue 10-17 coordinates ATP; it reads GIDGCGKT.

It belongs to the thymidylate kinase family.

It catalyses the reaction dTMP + ATP = dTDP + ADP. In terms of biological role, phosphorylation of dTMP to form dTDP in both de novo and salvage pathways of dTTP synthesis. The polypeptide is Thymidylate kinase (Prochlorococcus marinus (strain AS9601)).